We begin with the raw amino-acid sequence, 107 residues long: U1-lycotoxin-Ls1w (107 aa).

The first 20 residues, 1–20 (MLKVLVVVALLVTLISYSSS), serve as a signal peptide directing secretion. A propeptide spanning residues 21 to 41 (EGIDDLEADELLSLMANEQTR) is cleaved from the precursor. Intrachain disulfides connect Cys-44-Cys-59, Cys-51-Cys-68, Cys-58-Cys-86, and Cys-70-Cys-84.

Belongs to the neurotoxin 19 (CSTX) family. 04 (U1-Lctx) subfamily. As to expression, expressed by the venom gland.

It localises to the secreted. The chain is U1-lycotoxin-Ls1w from Lycosa singoriensis (Wolf spider).